The chain runs to 484 residues: Neuronal acetylcholine receptor subunit alpha-9 (484 aa).

The first 27 residues, Met1–Ser27, serve as a signal peptide directing secretion. Residues Ala28–Ser240 are Extracellular-facing. Asn59 carries N-linked (GlcNAc...) asparagine glycosylation. The cysteines at positions 157 and 171 are disulfide-linked. Asn172 is a glycosylation site (N-linked (GlcNAc...) asparagine). Residues Ser193 and Asp195 each coordinate Na(+). Cys221 and Cys222 are oxidised to a cystine. 3 helical membrane passes run Phe241 to Phe261, Val271 to Ile291, and Tyr305 to Val325. At His326–Arg462 the chain is on the cytoplasmic side. Residues Arg364–Ser395 form a disordered region. Residues Phe463 to Ala483 traverse the membrane as a helical segment.

It belongs to the ligand-gated ion channel (TC 1.A.9) family. Acetylcholine receptor (TC 1.A.9.1) subfamily. Alpha-9/CHRNA9 sub-subfamily. As to quaternary structure, forms homo- or heteropentameric channels in conjunction with CHRNA10. The native outer hair cell receptor is composed of CHRNA9:CHRNA10 heterooligomers. Found in the stoichiometric form (CHRNA9)2:(CHRNA10)3. As to expression, expressed in hair cells of the cochlea (at protein level). Expressed in hair cells of the cochlea.

The protein localises to the synaptic cell membrane. It is found in the cell membrane. The catalysed reaction is Ca(2+)(in) = Ca(2+)(out). It carries out the reaction K(+)(in) = K(+)(out). It catalyses the reaction Na(+)(in) = Na(+)(out). The enzyme catalyses Mg(2+)(in) = Mg(2+)(out). Activated by a myriad of ligands such as acetylcholine. AChR activity is inhibited by the antagonist alpha-conotoxins RgIA and GeXXA, small disulfide-constrained peptides from cone snails. Component of neuronal acetylcholine receptors (nAChRs) that function as pentameric, ligand-gated cation channels with high calcium permeability among other activities. nAChRs are excitatory neurotrasnmitter receptors formed by a collection of nAChR subunits known to mediate synaptic transmission in the nervous system and the neuromuscular junction. Each nAchR subunit confers differential attributes to channel properties, including activation, deactivation and desensitization kinetics, pH sensitivity, cation permeability, and binding to allosteric modulators. Forms either homopentamers or heteropentamers with CHRNA10. Expressed in the inner ear, in sympathetic neurons and in other non-neuronal cells, such as skin keratinocytes and lymphocytes. The channel is permeable to a range of divalent cations including calcium, the influx of which may activate a potassium current which hyperpolarizes the cell membrane. The protein is Neuronal acetylcholine receptor subunit alpha-9 (CHRNA9) of Gallus gallus (Chicken).